Reading from the N-terminus, the 122-residue chain is Fluoride-specific ion channel FluC 2 (122 aa).

4 helical membrane passes run 3–23 (ITAI…RMFI), 38–58 (TSIV…LNLT), 62–82 (LLLL…SFIY), and 93–113 (FMHL…CFYL). Na(+) is bound by residues Gly72 and Ser75.

This sequence belongs to the fluoride channel Fluc/FEX (TC 1.A.43) family.

Its subcellular location is the cell inner membrane. The catalysed reaction is fluoride(in) = fluoride(out). With respect to regulation, na(+) is not transported, but it plays an essential structural role and its presence is essential for fluoride channel function. Its function is as follows. Fluoride-specific ion channel. Important for reducing fluoride concentration in the cell, thus reducing its toxicity. The chain is Fluoride-specific ion channel FluC 2 from Prochlorococcus marinus (strain MIT 9312).